The sequence spans 138 residues: Endoribonuclease YbeY (138 aa).

Positions 106, 110, and 116 each coordinate Zn(2+).

This sequence belongs to the endoribonuclease YbeY family. It depends on Zn(2+) as a cofactor.

The protein localises to the cytoplasm. In terms of biological role, single strand-specific metallo-endoribonuclease involved in late-stage 70S ribosome quality control and in maturation of the 3' terminus of the 16S rRNA. This chain is Endoribonuclease YbeY, found in Phocaeicola vulgatus (strain ATCC 8482 / DSM 1447 / JCM 5826 / CCUG 4940 / NBRC 14291 / NCTC 11154) (Bacteroides vulgatus).